A 155-amino-acid polypeptide reads, in one-letter code: SsrA-binding protein (155 aa).

The segment covering 135–147 has biased composition (basic and acidic residues); sequence TIKRRDQERDIKK. Residues 135–155 are disordered; that stretch reads TIKRRDQERDIKKQMKHYNAR.

This sequence belongs to the SmpB family.

The protein localises to the cytoplasm. In terms of biological role, required for rescue of stalled ribosomes mediated by trans-translation. Binds to transfer-messenger RNA (tmRNA), required for stable association of tmRNA with ribosomes. tmRNA and SmpB together mimic tRNA shape, replacing the anticodon stem-loop with SmpB. tmRNA is encoded by the ssrA gene; the 2 termini fold to resemble tRNA(Ala) and it encodes a 'tag peptide', a short internal open reading frame. During trans-translation Ala-aminoacylated tmRNA acts like a tRNA, entering the A-site of stalled ribosomes, displacing the stalled mRNA. The ribosome then switches to translate the ORF on the tmRNA; the nascent peptide is terminated with the 'tag peptide' encoded by the tmRNA and targeted for degradation. The ribosome is freed to recommence translation, which seems to be the essential function of trans-translation. This Streptococcus pyogenes serotype M3 (strain SSI-1) protein is SsrA-binding protein.